A 61-amino-acid chain; its full sequence is Large ribosomal subunit protein uL30 (61 aa).

It belongs to the universal ribosomal protein uL30 family. As to quaternary structure, part of the 50S ribosomal subunit.

This chain is Large ribosomal subunit protein uL30, found in Bordetella avium (strain 197N).